The following is a 362-amino-acid chain: Serine/threonine-protein kinase ZRK4 (362 aa).

The disordered stretch occupies residues 1–23; that stretch reads MNDQKMSCWRKKSKKKNSEANQR. Positions 35 to 362 constitute a Protein kinase domain; it reads LEDLIELCNG…KELKRIERWT (328 aa). Residues 41 to 49 and K89 each bind ATP; that span reads LCNGKSNPI. The active-site Proton acceptor is D185.

The protein belongs to the protein kinase superfamily. Ser/Thr protein kinase family. ZRK subfamily.

It carries out the reaction L-seryl-[protein] + ATP = O-phospho-L-seryl-[protein] + ADP + H(+). The enzyme catalyses L-threonyl-[protein] + ATP = O-phospho-L-threonyl-[protein] + ADP + H(+). This chain is Serine/threonine-protein kinase ZRK4, found in Arabidopsis thaliana (Mouse-ear cress).